We begin with the raw amino-acid sequence, 215 residues long: Nascent polypeptide-associated complex subunit alpha (215 aa).

The tract at residues 1–81 (MPGEATETVP…SEKKARKAMS (81 aa)) is disordered. A compositionally biased stretch (polar residues) spans 9 to 28 (VPATEQELPQPQAETGSGTE). Residues 29–42 (SDSDESVPELEEQD) are compositionally biased toward acidic residues. The residue at position 43 (Ser-43) is a Phosphoserine; by ILK1. Residues 44 to 57 (TQTATQQAQLAAAA) are compositionally biased toward low complexity. A required for DNA-binding region spans residues 69–80 (QSRSEKKARKAM). The 66-residue stretch at 70-135 (SRSEKKARKA…AKIEDLSQQA (66 aa)) folds into the NAC-A/B domain. Positions 93 to 108 (RVTIRKSKNILFVITK) are RNA/DNA-binding. At Ser-132 the chain carries Phosphoserine. Lys-142 carries the post-translational modification N6-acetyllysine; alternate. Lys-142 is covalently cross-linked (Glycyl lysine isopeptide (Lys-Gly) (interchain with G-Cter in SUMO2); alternate). Thr-159 is modified (phosphothreonine; by GSK3-beta). The residue at position 161 (Thr-161) is a Phosphothreonine. A phosphoserine mark is found at Ser-166, Ser-186, Ser-191, and Ser-203. Positions 176–213 (VEVKDIELVMSQANVSRAKAVRALKNNSNDIVNAIMEL) constitute a UBA domain.

The protein belongs to the NAC-alpha family. In terms of assembly, part of the nascent polypeptide-associated complex (NAC), which is a heterodimer of NACA and BTF3 (via NAC-A/B domains). NAC associates with ribosomes through the BTF3/NACB subunit and contacts the ribosomal protein L23, which is positioned near the exiting site. Both subunits can contact nascent polypeptide chains. NACA may also form homodimers, and only this form binds DNA. Interacts with TBP and JUN. In terms of processing, phosphorylation of Ser-43 by ILK during cell adhesion may promote nuclear localization. Phosphorylation of Thr-159 by GSK3B may promote proteasome mediated degradation. In terms of tissue distribution, isoform 1 appears to be ubiquitously expressed.

The protein localises to the cytoplasm. It is found in the nucleus. Prevents inappropriate targeting of non-secretory polypeptides to the endoplasmic reticulum (ER). Binds to nascent polypeptide chains as they emerge from the ribosome and blocks their interaction with the signal recognition particle (SRP), which normally targets nascent secretory peptides to the ER. Also reduces the inherent affinity of ribosomes for protein translocation sites in the ER membrane (M sites). Isoform 1 and isoform 2 appear to bind DNA and play roles in transcription. Isoform 1 may function as a specific coactivator for JUN, acting to stabilize the interaction of JUN homodimers with promoter elements. The polypeptide is Nascent polypeptide-associated complex subunit alpha (Naca) (Mus musculus (Mouse)).